Consider the following 91-residue polypeptide: DNA-binding protein HU (91 aa).

Belongs to the bacterial histone-like protein family.

In terms of biological role, histone-like DNA-binding protein which is capable of wrapping DNA to stabilize it, and thus to prevent its denaturation under extreme environmental conditions. Also seems to act as a fortuitous virulence factor in delayed sequelae by binding to heparan sulfate-proteoglycans in the extracellular matrix of target organs and acting as a nidus for in situ immune complex formation. The chain is DNA-binding protein HU (hup) from Streptococcus mutans serotype c (strain ATCC 700610 / UA159).